Here is an 81-residue protein sequence, read N- to C-terminus: Cytochrome c oxidase subunit 7A1, mitochondrial (81 aa).

Residues 1–21 constitute a mitochondrion transit peptide; that stretch reads MRHLLGLPQLASRAFSTTVRQ. The helical transmembrane segment at 51-72 threads the bilayer; that stretch reads ILYRLTMTLTVVGTGYSLYWLL.

The protein belongs to the cytochrome c oxidase VIIa family. In terms of assembly, component of the complex IV (CIV, cytochrome c oxidase). The complex exists as a monomer or a dimer and forms supercomplexes (SCs) in the inner mitochondrial membrane with NADH-ubiquinone oxidoreductase (complex I, CI) and ubiquinol-cytochrome c oxidoreductase (cytochrome b-c1 complex, complex III, CIII), resulting in different assemblies (supercomplex SCI(1)III(2)IV(1) and megacomplex MCI(2)III(2)IV(2)).

The protein resides in the mitochondrion inner membrane. The protein operates within energy metabolism; oxidative phosphorylation. Component of the mitochondrial respiratory complex IV (CIV, also named cytochrome c oxidase complex), the last enzyme in the mitochondrial electron transport chain which drives oxidative phosphorylation. The CIV complex is the component of the respiratory chain that catalyzes the reduction of oxygen to water. Acts as an assembly factor that specifically drives the homodimerization of CIV complexes, mediating the formation of mitochondrial respiratory supercomplexes (respirasomes) containing two CIV: supercomplxes with two molecules of CIV show improved activity. In Danio rerio (Zebrafish), this protein is Cytochrome c oxidase subunit 7A1, mitochondrial.